A 403-amino-acid polypeptide reads, in one-letter code: MTLSSADQARLDQFWEHCLKNQYFNIGYPENADFNYAQLHRFLRFSINNCGDWAEPGNYLLNSFDFEKDVMAYFAELFSIPLEESWGYVTNGGTEGNMFGCYLARELFPTGTLYYSKDTHYSVAKIVKLLRIDCRAVESLPNGEIDYDDLMAKIAADQEQHPIIFVNVGTTMRGAIDNIATIQQRLEEVGIPREDYYLHADAALSGMILPFVDNPQPFNFADGVDSICVSGHKMIGSPIPCGIVVAKRENVERISVDVDYIRANDKTISGSRNGHTPMMMWAALRSHSPAQWRRRVRHSLNSAQYAVDRLQAAGIDAWRHDNSITVVFPCPSSRIARKYCLATSGDTAHLITTPHHQDKSMIDALIDEVIAEHQPNEWRAGLGLAGLDGVPPERVAASHFDVI.

Histidine 120 is a substrate binding site. Position 233 is an N6-(pyridoxal phosphate)lysine (lysine 233).

The protein belongs to the group II decarboxylase family. In terms of assembly, homotetramer. Pyridoxal 5'-phosphate is required as a cofactor.

It carries out the reaction L-histidine + H(+) = histamine + CO2. The sequence is that of Histidine decarboxylase from Pseudomonas entomophila (strain L48).